A 264-amino-acid chain; its full sequence is Cancer/testis antigen 55 (264 aa).

A disordered region spans residues 242-264; that stretch reads SSSGFQDDGGLGRPKRERRSQSI. Over residues 254-264 the composition is skewed to basic residues; that stretch reads RPKRERRSQSI.

Interacts with GABARAP; this interaction may be important for GABARAP protein stability. Isoform 1 interacts with LAMP2; this interaction may be important for LAMP2 protein stability. In terms of tissue distribution, testis-specific. Expressed in spermatozoa (at protein level).

The protein resides in the cytoplasm. It localises to the cytoplasmic vesicle. It is found in the secretory vesicle. Its subcellular location is the acrosome. The protein localises to the cell projection. The protein resides in the cilium. It localises to the flagellum. Its function is as follows. Plays a role in spermatogenesis, possibly acting in the regulation of the autophagy pathway. The chain is Cancer/testis antigen 55 (CT55) from Homo sapiens (Human).